Reading from the N-terminus, the 599-residue chain is Elongation factor 4 (599 aa).

The region spanning 2–184 (KNIRNFSIIA…RLVRDIPPPE (183 aa)) is the tr-type G domain. Residues 14–19 (DHGKST) and 131–134 (NKID) contribute to the GTP site.

It belongs to the TRAFAC class translation factor GTPase superfamily. Classic translation factor GTPase family. LepA subfamily.

It localises to the cell inner membrane. It catalyses the reaction GTP + H2O = GDP + phosphate + H(+). Required for accurate and efficient protein synthesis under certain stress conditions. May act as a fidelity factor of the translation reaction, by catalyzing a one-codon backward translocation of tRNAs on improperly translocated ribosomes. Back-translocation proceeds from a post-translocation (POST) complex to a pre-translocation (PRE) complex, thus giving elongation factor G a second chance to translocate the tRNAs correctly. Binds to ribosomes in a GTP-dependent manner. In Cronobacter sakazakii (strain ATCC BAA-894) (Enterobacter sakazakii), this protein is Elongation factor 4.